The following is a 189-amino-acid chain: Translation initiation factor IF-3 (189 aa).

It belongs to the IF-3 family. Monomer.

It localises to the cytoplasm. In terms of biological role, IF-3 binds to the 30S ribosomal subunit and shifts the equilibrium between 70S ribosomes and their 50S and 30S subunits in favor of the free subunits, thus enhancing the availability of 30S subunits on which protein synthesis initiation begins. The protein is Translation initiation factor IF-3 of Corynebacterium glutamicum (strain ATCC 13032 / DSM 20300 / JCM 1318 / BCRC 11384 / CCUG 27702 / LMG 3730 / NBRC 12168 / NCIMB 10025 / NRRL B-2784 / 534).